A 229-amino-acid polypeptide reads, in one-letter code: Cilia- and flagella-associated protein 95 (229 aa).

Over 1–123 (MDSLDRSCQD…LLNEETVSSG (123 aa)) the chain is Extracellular. A glycan (N-linked (GlcNAc...) asparagine) is linked at N75. A helical membrane pass occupies residues 124 to 140 (IIERVTGLPATGFGAVF). Residues 141–229 (PRHPPDWSKM…PLTSGPIVPI (89 aa)) are Cytoplasmic-facing. The mn stretch occupies residues 153-163 (LTTYSEDYVPP).

As to quaternary structure, microtubule inner protein component of sperm flagellar doublet microtubules. Interacts with MYH9. Interacts with MYH10. Expressed in undifferentiated embryonic stem cells. Expressed in airway epithelial cells.

Its subcellular location is the cytoplasm. It is found in the cytoskeleton. The protein resides in the cilium axoneme. The protein localises to the flagellum axoneme. It localises to the cell membrane. Its function is as follows. Microtubule inner protein (MIP) part of the dynein-decorated doublet microtubules (DMTs) in cilia axoneme, which is required for motile cilia beating. The sequence is that of Cilia- and flagella-associated protein 95 from Homo sapiens (Human).